We begin with the raw amino-acid sequence, 1252 residues long: DNA-directed RNA polymerase subunit beta (1252 aa).

It belongs to the RNA polymerase beta chain family. The RNAP catalytic core consists of 2 alpha, 1 beta, 1 beta' and 1 omega subunit. When a sigma factor is associated with the core the holoenzyme is formed, which can initiate transcription.

The enzyme catalyses RNA(n) + a ribonucleoside 5'-triphosphate = RNA(n+1) + diphosphate. Functionally, DNA-dependent RNA polymerase catalyzes the transcription of DNA into RNA using the four ribonucleoside triphosphates as substrates. In Chlamydia trachomatis serovar L2 (strain ATCC VR-902B / DSM 19102 / 434/Bu), this protein is DNA-directed RNA polymerase subunit beta.